We begin with the raw amino-acid sequence, 416 residues long: Chaperone protein dnaJ A6 (416 aa).

The 62-residue stretch at 12–73 folds into the J domain; that stretch reads KYYEVLGVPK…EKRDIYDQYG (62 aa). The CR-type zinc-finger motif lies at 133 to 217; sequence GSMKKLSLSR…CRASKVIQEK (85 aa). The Zn(2+) site is built by Cys146, Cys149, Cys162, Cys165, Cys189, Cys192, Cys205, and Cys208. CXXCXGXG motif repeat units follow at residues 146-153, 162-169, and 189-196; these read CPKCKGKG, CYGCHGVG, and CPECRGSG. The span at 380–399 shows a compositional bias: basic and acidic residues; sequence HDVNIEEEMRRKQYQRKQEA. Residues 380–416 are disordered; the sequence is HDVNIEEEMRRKQYQRKQEAYDEDEEEDAPRVQCAQQ.

It belongs to the DnaJ family. Interacts with ZFP1.

It localises to the nucleus. Its subcellular location is the cytoplasm. In terms of biological role, involved in disease resistance. Acts as a negative regulator of innate immunity to the rice blast fungus (Magnaporthe oryzae). Acts as a negative regulator of the pathogen-associated molecular pattern (PAMP)-triggered immunity (PTI) response through the inhibition of reactive oxygen species (ROS) accumulation and expression of defense-related genes. May function via the ubiquitin-proteasome degradation pathway. This is Chaperone protein dnaJ A6 from Oryza sativa subsp. japonica (Rice).